A 357-amino-acid polypeptide reads, in one-letter code: Peptide chain release factor 1 (357 aa).

Residue glutamine 235 is modified to N5-methylglutamine. Positions 285–305 are disordered; sequence KRHNEASAMRSAQVGSGDRSE.

Belongs to the prokaryotic/mitochondrial release factor family. Post-translationally, methylated by PrmC. Methylation increases the termination efficiency of RF1.

It localises to the cytoplasm. In terms of biological role, peptide chain release factor 1 directs the termination of translation in response to the peptide chain termination codons UAG and UAA. This chain is Peptide chain release factor 1 (prfA), found in Chlamydia pneumoniae (Chlamydophila pneumoniae).